A 131-amino-acid polypeptide reads, in one-letter code: Snaclec macrovipecetin subunit alpha (131 aa).

Intrachain disulfides connect cysteine 2–cysteine 13, cysteine 30–cysteine 125, and cysteine 100–cysteine 117. The 118-residue stretch at 9–126 folds into the C-type lectin domain; it reads HEEHCYKVFR…CEDKNPFICK (118 aa).

As to quaternary structure, heterodimer of subunits alpha and beta; disulfide-linked. In terms of tissue distribution, expressed by the venom gland.

The protein localises to the secreted. Its function is as follows. Interferes with one step of hemostasis (modulation of platelet aggregation, or coagulation cascade, for example). In Macrovipera lebetinus (Levantine viper), this protein is Snaclec macrovipecetin subunit alpha.